Consider the following 261-residue polypeptide: CD40 ligand (261 aa).

At 1–22 (MIETYNQPVPRSAATGPPVSMK) the chain is on the cytoplasmic side. The helical; Signal-anchor for type II membrane protein transmembrane segment at 23–43 (IFMYLLTVFLITQMIGSALFA) threads the bilayer. Over 44–261 (VYLHRRLDKI…GFTSFGLLKL (218 aa)) the chain is Extracellular. Positions 122-261 (IAAHVISEAS…GFTSFGLLKL (140 aa)) constitute a THD domain. A disulfide bond links Cys-178 and Cys-218. A glycan (N-linked (GlcNAc...) asparagine) is linked at Asn-240.

This sequence belongs to the tumor necrosis factor family. Homotrimer. Interacts with CD28. CD40 ligand, soluble form: Exists as either a monomer or a homotrimer. Forms a ternary complex between CD40 and integrins for CD40-CD40LG signaling. In terms of processing, the soluble form derives from the membrane form by proteolytic processing.

It localises to the cell membrane. The protein localises to the cell surface. It is found in the secreted. In terms of biological role, cytokine that acts as a ligand to CD40/TNFRSF5. Costimulates T-cell proliferation and cytokine production. Its cross-linking on T-cells generates a costimulatory signal which enhances the production of IL4 and IL10 in conjunction with the TCR/CD3 ligation and CD28 costimulation. Induces the activation of NF-kappa-B. Induces the activation of kinases MAPK8 and PAK2 in T-cells. Mediates B-cell proliferation in the absence of co-stimulus as well as IgE production in the presence of IL4. Involved in immunoglobulin class switching. Acts as a ligand for integrins, specifically ITGA5:ITGB1 and ITGAV:ITGB3; both integrins and the CD40 receptor are required for activation of CD40-CD40LG signaling, which have cell-type dependent effects, such as B-cell activation, NF-kappa-B signaling and anti-apoptotic signaling. The sequence is that of CD40 ligand (CD40LG) from Callithrix jacchus (White-tufted-ear marmoset).